A 216-amino-acid chain; its full sequence is Holliday junction branch migration complex subunit RuvA (216 aa).

The domain I stretch occupies residues 1–64 (MISFIKGVLI…EDAQQLYGFK (64 aa)). The segment at 65-143 (SKVDKKVFQE…KMANEIYAQT (79 aa)) is domain II. Residues 144–163 (SGTTTTSQDSQAQQAPTSVV) form a flexible linker region. The interval 164–216 (LANSIFNESVDALLALGYKQKDAEKMARSAMGDATTAAEVIRKALQGSIKSKG) is domain III.

This sequence belongs to the RuvA family. In terms of assembly, homotetramer. Forms an RuvA(8)-RuvB(12)-Holliday junction (HJ) complex. HJ DNA is sandwiched between 2 RuvA tetramers; dsDNA enters through RuvA and exits via RuvB. An RuvB hexamer assembles on each DNA strand where it exits the tetramer. Each RuvB hexamer is contacted by two RuvA subunits (via domain III) on 2 adjacent RuvB subunits; this complex drives branch migration. In the full resolvosome a probable DNA-RuvA(4)-RuvB(12)-RuvC(2) complex forms which resolves the HJ.

It is found in the cytoplasm. In terms of biological role, the RuvA-RuvB-RuvC complex processes Holliday junction (HJ) DNA during genetic recombination and DNA repair, while the RuvA-RuvB complex plays an important role in the rescue of blocked DNA replication forks via replication fork reversal (RFR). RuvA specifically binds to HJ cruciform DNA, conferring on it an open structure. The RuvB hexamer acts as an ATP-dependent pump, pulling dsDNA into and through the RuvAB complex. HJ branch migration allows RuvC to scan DNA until it finds its consensus sequence, where it cleaves and resolves the cruciform DNA. This Francisella tularensis subsp. holarctica (strain FTNF002-00 / FTA) protein is Holliday junction branch migration complex subunit RuvA.